The chain runs to 122 residues: Holo-[acyl-carrier-protein] synthase (122 aa).

Positions 8 and 56 each coordinate Mg(2+).

It belongs to the P-Pant transferase superfamily. AcpS family. The cofactor is Mg(2+).

The protein localises to the cytoplasm. The catalysed reaction is apo-[ACP] + CoA = holo-[ACP] + adenosine 3',5'-bisphosphate + H(+). In terms of biological role, transfers the 4'-phosphopantetheine moiety from coenzyme A to a Ser of acyl-carrier-protein. This chain is Holo-[acyl-carrier-protein] synthase, found in Salinispora arenicola (strain CNS-205).